The sequence spans 363 residues: Chorismate synthase (363 aa).

Positions 42 to 61 (QRDLDRRKPGTSRHTTQRQE) are disordered. NADP(+) contacts are provided by Arg48 and Arg54. Residues 125–127 (RSS), 237–238 (NA), Gly277, 292–296 (KPTSS), and Arg318 each bind FMN.

The protein belongs to the chorismate synthase family. In terms of assembly, homotetramer. FMNH2 is required as a cofactor.

The enzyme catalyses 5-O-(1-carboxyvinyl)-3-phosphoshikimate = chorismate + phosphate. It functions in the pathway metabolic intermediate biosynthesis; chorismate biosynthesis; chorismate from D-erythrose 4-phosphate and phosphoenolpyruvate: step 7/7. Its function is as follows. Catalyzes the anti-1,4-elimination of the C-3 phosphate and the C-6 proR hydrogen from 5-enolpyruvylshikimate-3-phosphate (EPSP) to yield chorismate, which is the branch point compound that serves as the starting substrate for the three terminal pathways of aromatic amino acid biosynthesis. This reaction introduces a second double bond into the aromatic ring system. This Pseudomonas aeruginosa (strain LESB58) protein is Chorismate synthase.